A 769-amino-acid chain; its full sequence is Serine protease HtrA-like (769 aa).

The segment covering 1–20 has biased composition (basic residues); it reads MDIGKKHVIPKSQYRRKRRE. The interval 1 to 390 is disordered; sequence MDIGKKHVIP…ATSKLNKGRA (390 aa). Composition is skewed to basic and acidic residues over residues 21–64 and 71–108; these read FFHN…ERFK and LEQR…DVSK. The span at 126-137 shows a compositional bias: polar residues; sequence YEQNSEATLSTK. The span at 138-186 shows a compositional bias: basic and acidic residues; it reads STDKVESTEMRKLSSDKNKVGHEEQHVLSKPSEHDKETRIDSESSRTDS. A compositionally biased stretch (polar residues) spans 247–262; it reads QQSQNEQTKTYTYGDS. Basic and acidic residues-rich tracts occupy residues 264–296 and 310–330; these read QNDK…HIVD and KTDD…HKQN. A compositionally biased stretch (polar residues) spans 331-347; that stretch reads ADSSETVGYQSQSTASH. Residues 348–364 are compositionally biased toward basic and acidic residues; that stretch reads RSTEKRNISINDHDKLN. The segment covering 365–390 has biased composition (polar residues); the sequence is GQKTNTKTSANNNQKKATSKLNKGRA. Residues 410–430 traverse the membrane as a helical segment; sequence LVILMGIIILIVILNAIFNNV. Residues His504, Asp534, and Ser619 each act as charge relay system in the active site. The PDZ domain maps to 680–733; that stretch reads IASLNSFERQAVKLPGKVKNGVVVDQVDNNGLADQSGLKKGDVITELDGKLLED.

The protein belongs to the peptidase S1C family.

It localises to the cell membrane. This Staphylococcus aureus (strain USA300) protein is Serine protease HtrA-like.